We begin with the raw amino-acid sequence, 360 residues long: Glucan endo-1,3-beta-glucosidase B (360 aa).

A signal peptide spans 1 to 25 (MATSQIAIIVLLGLLVATNIHITEA). Residue Gln-26 is modified to Pyrrolidone carboxylic acid. Residue Glu-120 is the Proton donor of the active site. Glu-265 (nucleophile) is an active-site residue. Positions 341 to 360 (VSERVWDITNSTASSLTSEI) are cleaved as a propeptide — removed in mature form. Asn-350 is a glycosylation site (N-linked (GlcNAc...) asparagine).

The protein belongs to the glycosyl hydrolase 17 family.

The protein localises to the vacuole. The catalysed reaction is Hydrolysis of (1-&gt;3)-beta-D-glucosidic linkages in (1-&gt;3)-beta-D-glucans.. Its function is as follows. Implicated in the defense of plants against pathogens. The sequence is that of Glucan endo-1,3-beta-glucosidase B from Solanum lycopersicum (Tomato).